We begin with the raw amino-acid sequence, 101 residues long: Putative defensin-like protein 253 (101 aa).

The signal sequence occupies residues 1–23; it reads MRFASLFVVYCTFMFLDISHVKC. Cystine bridges form between Cys-31/Cys-84, Cys-41/Cys-66, Cys-49/Cys-76, and Cys-64/Cys-78.

Belongs to the DEFL family.

The protein resides in the secreted. This chain is Putative defensin-like protein 253 (SCRL15), found in Arabidopsis thaliana (Mouse-ear cress).